A 79-amino-acid chain; its full sequence is MSEISVTQTLDTLGLRCPEPVMLVRKNIRHLNDGEILLIIADDPATTRDIPSFCQFMDHTLLQCEVEKPPFKYWVKRGK.

Residue Cys-17 is the Cysteine persulfide intermediate of the active site.

Belongs to the sulfur carrier protein TusA family.

It is found in the cytoplasm. Sulfur carrier protein which probably makes part of a sulfur-relay system. The polypeptide is Sulfur carrier protein TusA (Haemophilus influenzae (strain ATCC 51907 / DSM 11121 / KW20 / Rd)).